A 142-amino-acid polypeptide reads, in one-letter code: Small ribosomal subunit protein uS9 (142 aa).

The tract at residues 117–142 is disordered; the sequence is KGDPRRTEHKKPGIKHARSKRQKAYR. Over residues 123–142 the composition is skewed to basic residues; the sequence is TEHKKPGIKHARSKRQKAYR.

Belongs to the universal ribosomal protein uS9 family.

This is Small ribosomal subunit protein uS9 from Pyrobaculum aerophilum (strain ATCC 51768 / DSM 7523 / JCM 9630 / CIP 104966 / NBRC 100827 / IM2).